Reading from the N-terminus, the 56-residue chain is Potassium channel toxin alpha-KTx 9.1 (56 aa).

The signal sequence occupies residues 1–28 (MSRLFTLVLIVLAMNVMMAIISDPVVEA). 3 cysteine pairs are disulfide-bonded: C31–C47, C34–C52, and C38–C54.

Expressed by the venom gland.

It localises to the secreted. Blocks small conductance calcium-activated potassium channels (KCNN, SK). Weakly inhibits the Kv7.1/KCNQ1 channel (10 uM of the toxin inhibits currents by 23.3%). Low toxicity by intracerebroventricular injection into mice. The sequence is that of Potassium channel toxin alpha-KTx 9.1 from Olivierus martensii (Manchurian scorpion).